Consider the following 278-residue polypeptide: Elongation factor Ts (278 aa).

An involved in Mg(2+) ion dislocation from EF-Tu region spans residues 79–82 (TDFV).

This sequence belongs to the EF-Ts family.

It is found in the cytoplasm. In terms of biological role, associates with the EF-Tu.GDP complex and induces the exchange of GDP to GTP. It remains bound to the aminoacyl-tRNA.EF-Tu.GTP complex up to the GTP hydrolysis stage on the ribosome. This Borrelia duttonii (strain Ly) protein is Elongation factor Ts.